The sequence spans 335 residues: GTPase Obg (335 aa).

One can recognise an Obg domain in the interval Met1–Ile158. One can recognise an OBG-type G domain in the interval Ala159 to Ala334. Residues Gly165–Ser172, Phe190–Gln194, Asp215–Gly218, Asn285–Asp288, and Ser315–Leu317 contribute to the GTP site. Mg(2+) is bound by residues Ser172 and Thr192.

Belongs to the TRAFAC class OBG-HflX-like GTPase superfamily. OBG GTPase family. In terms of assembly, monomer. Requires Mg(2+) as cofactor.

The protein localises to the cytoplasm. Its function is as follows. An essential GTPase (4.1 pmol GTP/min). Cannot substitute endogenous obg in E.coli, has a partially dominant-negative phenotype upon overexpression in liquid culture leading to decreased growth rate in a concentration-dependent fashion, with 50% of cells being elongated. Binds GTP, GDP and possibly (p)ppGpp with moderate affinity, with high nucleotide exchange rates and a fairly low GTP hydrolysis rate. It may play a role in control of the cell cycle, stress response, ribosome biogenesis and in those bacteria that undergo differentiation, in morphogenesis control. The protein is GTPase Obg of Chlamydia abortus (strain DSM 27085 / S26/3) (Chlamydophila abortus).